Here is a 241-residue protein sequence, read N- to C-terminus: Small ribosomal subunit protein bS6 (241 aa).

A compositionally biased stretch (basic residues) spans 97 to 108; that stretch reads KPKIRERNRKYT. 2 disordered regions span residues 97-187 and 199-241; these read KPKI…HREN and NKNH…QSSN. Basic and acidic residues predominate over residues 109 to 118; the sequence is PRRDRFDKPN. 3 stretches are compositionally biased toward low complexity: residues 130 to 151, 161 to 180, and 199 to 210; these read QDQQATKNQQNFQQNQQNQTSQ, DDFQQVSSNQQNFRQNQQNQ, and NKNHQNQTSQTQ.

It belongs to the bacterial ribosomal protein bS6 family.

Its function is as follows. Binds together with bS18 to 16S ribosomal RNA. This Mesomycoplasma hyopneumoniae (strain 7448) (Mycoplasma hyopneumoniae) protein is Small ribosomal subunit protein bS6.